A 354-amino-acid chain; its full sequence is Trans-L-3-hydroxyproline dehydratase (354 aa).

Catalysis depends on C104, which acts as the Proton acceptor. Residues 105-106 (GH), D269, and 274-275 (GS) contribute to the substrate site.

This sequence belongs to the proline racemase family. As to quaternary structure, homodimer.

It carries out the reaction trans-3-hydroxy-L-proline = 1-pyrroline-2-carboxylate + H2O. Catalyzes the dehydration of trans-3-hydroxy-L-proline to Delta(1)-pyrroline-2-carboxylate (Pyr2C). The protein is Trans-L-3-hydroxyproline dehydratase (L3HYPDH) of Bos taurus (Bovine).